Reading from the N-terminus, the 439-residue chain is Dolichyl-diphosphooligosaccharide--protein glycosyltransferase 48 kDa subunit (439 aa).

Residues Met-1–Ala-25 form the signal peptide. Over Gly-27 to Pro-410 the chain is Lumenal. A helical transmembrane segment spans residues Tyr-411–Leu-430. Residues His-431–Asp-439 lie on the Cytoplasmic side of the membrane.

The protein belongs to the DDOST 48 kDa subunit family. As to quaternary structure, component of the oligosaccharyltransferase (OST) complex. OST exists in two different complex forms which contain common core subunits RPN1, RPN2, OST48, OST4, DAD1 and TMEM258, either STT3A or STT3B as catalytic subunits, and form-specific accessory subunits. STT3A complex assembly occurs through the formation of 3 subcomplexes. Subcomplex 1 contains RPN1 and TMEM258, subcomplex 2 contains the STT3A-specific subunits STT3A, DC2/OSTC, and KCP2 as well as the core subunit OST4, and subcomplex 3 contains RPN2, DAD1, and OST48. The STT3A complex can form stable complexes with the Sec61 complex or with both the Sec61 and TRAP complexes. Interacts with SMIM22.

It is found in the endoplasmic reticulum membrane. Its pathway is protein modification; protein glycosylation. In terms of biological role, subunit of the oligosaccharyl transferase (OST) complex that catalyzes the initial transfer of a defined glycan (Glc(3)Man(9)GlcNAc(2) in eukaryotes) from the lipid carrier dolichol-pyrophosphate to an asparagine residue within an Asn-X-Ser/Thr consensus motif in nascent polypeptide chains, the first step in protein N-glycosylation. N-glycosylation occurs cotranslationally and the complex associates with the Sec61 complex at the channel-forming translocon complex that mediates protein translocation across the endoplasmic reticulum (ER). All subunits are required for a maximal enzyme activity. Required for the assembly of both SST3A- and SS3B-containing OST complexes. The protein is Dolichyl-diphosphooligosaccharide--protein glycosyltransferase 48 kDa subunit of Sus scrofa (Pig).